A 193-amino-acid polypeptide reads, in one-letter code: Putative 3-methyladenine DNA glycosylase (193 aa).

This sequence belongs to the DNA glycosylase MPG family.

The sequence is that of Putative 3-methyladenine DNA glycosylase from Francisella tularensis subsp. holarctica (strain FTNF002-00 / FTA).